A 559-amino-acid polypeptide reads, in one-letter code: Laccase-7 (559 aa).

The first 28 residues, 1–28 (MVIPWCSSMMRLLWFLFALLLARSVADA), serve as a signal peptide directing secretion. Residues asparagine 32, asparagine 47, and asparagine 82 are each glycosylated (N-linked (GlcNAc...) asparagine). Plastocyanin-like domains follow at residues 36 to 152 (TVES…PRNG) and 163 to 316 (EVPI…YNTT). Cu cation-binding residues include histidine 86 and histidine 88. N-linked (GlcNAc...) asparagine glycans are attached at residues asparagine 112 and asparagine 120. Cu cation-binding residues include histidine 131 and histidine 133. Asparagine 151, asparagine 210, asparagine 220, asparagine 257, asparagine 278, asparagine 314, asparagine 363, and asparagine 443 each carry an N-linked (GlcNAc...) asparagine glycan. Residues 396–543 (FRLPSQMSLL…GMVFAVDNGT (148 aa)) form the Plastocyanin-like 3 domain. Positions 461, 464, and 466 each coordinate Cu cation. Residue asparagine 484 is glycosylated (N-linked (GlcNAc...) asparagine). Residues histidine 522, cysteine 523, histidine 524, and histidine 528 each coordinate Cu cation. A glycan (N-linked (GlcNAc...) asparagine) is linked at asparagine 541.

This sequence belongs to the multicopper oxidase family. The cofactor is Cu cation.

Its subcellular location is the secreted. It localises to the extracellular space. The protein resides in the apoplast. It catalyses the reaction 4 hydroquinone + O2 = 4 benzosemiquinone + 2 H2O. In terms of biological role, lignin degradation and detoxification of lignin-derived products. In Oryza sativa subsp. japonica (Rice), this protein is Laccase-7 (LAC7).